The primary structure comprises 347 residues: Eukaryotic translation initiation factor 3 subunit I (347 aa).

WD repeat units follow at residues 8 to 47 (GHER…RLGT), 50 to 89 (DHSG…AVHS), 150 to 190 (EQAT…VQAK), 192 to 233 (IHEK…KTYK), and 289 to 328 (GHFG…FDFK).

Belongs to the eIF-3 subunit I family. Component of the eukaryotic translation initiation factor 3 (eIF-3) complex.

It is found in the cytoplasm. Functionally, component of the eukaryotic translation initiation factor 3 (eIF-3) complex, which is involved in protein synthesis of a specialized repertoire of mRNAs and, together with other initiation factors, stimulates binding of mRNA and methionyl-tRNAi to the 40S ribosome. The eIF-3 complex specifically targets and initiates translation of a subset of mRNAs involved in cell proliferation. The protein is Eukaryotic translation initiation factor 3 subunit I of Kluyveromyces lactis (strain ATCC 8585 / CBS 2359 / DSM 70799 / NBRC 1267 / NRRL Y-1140 / WM37) (Yeast).